The primary structure comprises 29 residues: Probable small toxic protein BsrH (29 aa).

The helical transmembrane segment at 6–26 (FQALMLMLAFGSFIIALLTYI) threads the bilayer.

It is found in the cell membrane. Possible toxic component of a type I toxin-antitoxin (TA) system; an overlapping antisense RNA has been identified. The chain is Probable small toxic protein BsrH from Bacillus subtilis (strain 168).